We begin with the raw amino-acid sequence, 461 residues long: 23S rRNA (uracil(1939)-C(5))-methyltransferase RlmD (461 aa).

Positions 1–26 (MAKHERGLRFQPTGGSKAPQIPTGKK) are disordered. The 59-residue stretch at 20–78 (QIPTGKKQRLSIERLANDGRGIAFFEGKTWFVLGALAGEEVEARVLGAHGKVVEARTER) folds into the TRAM domain. [4Fe-4S] cluster is bound by residues C91, C97, C100, and C179. S-adenosyl-L-methionine is bound by residues Q283, F312, N317, E333, D360, and D381. C407 acts as the Nucleophile in catalysis.

This sequence belongs to the class I-like SAM-binding methyltransferase superfamily. RNA M5U methyltransferase family. RlmD subfamily.

It carries out the reaction uridine(1939) in 23S rRNA + S-adenosyl-L-methionine = 5-methyluridine(1939) in 23S rRNA + S-adenosyl-L-homocysteine + H(+). In terms of biological role, catalyzes the formation of 5-methyl-uridine at position 1939 (m5U1939) in 23S rRNA. The polypeptide is 23S rRNA (uracil(1939)-C(5))-methyltransferase RlmD (Pseudomonas fluorescens (strain Pf0-1)).